The chain runs to 355 residues: MSERATYAARRVLPDAPLLAAAEGRTPGRRPVWFMRQAGRSLPEYREIRSGIGMLESCFDPALVCEITMQPVRRHGVDAAILFSDIVVPLKAAGIDLDIVAGTGPVVANPVRSIADVAALPRLVPEEVGAVAQAVQLLTAELGSTPLIGFAGAPFTLASYLVEGGPSRNHERTKALMHSDPRTWHALLGTLADTTITFLQTQLRAGVDAIQLFDSWAGALSLAEYREFVLPHSERVFAEVESAKVPRIHFGVGTGELLGAMGEAGADVVGVDWRIPLDVAARRVGPGKALQGNLDPAVLFAGPAAVEKQVRRITAEADAALAAGATGHIFNLGHGVLPDTDPGALTALVELVHSL.

Substrate is bound by residues 36–40 (RQAGR), aspartate 85, tyrosine 160, serine 215, and histidine 334.

The protein belongs to the uroporphyrinogen decarboxylase family. Homodimer.

The protein localises to the cytoplasm. The enzyme catalyses uroporphyrinogen III + 4 H(+) = coproporphyrinogen III + 4 CO2. The protein operates within porphyrin-containing compound metabolism; protoporphyrin-IX biosynthesis; coproporphyrinogen-III from 5-aminolevulinate: step 4/4. Catalyzes the decarboxylation of four acetate groups of uroporphyrinogen-III to yield coproporphyrinogen-III. The chain is Uroporphyrinogen decarboxylase from Rhodococcus jostii (strain RHA1).